Here is a 709-residue protein sequence, read N- to C-terminus: DCC-interacting protein 13-alpha (709 aa).

Positions methionine 1–serine 428 are required for RAB5A binding. Residues glycine 3–proline 268 form the BAR domain. A coiled-coil region spans residues serine 215–aspartate 259. Residues leucine 277–lysine 375 form the PH domain. Disordered stretches follow at residues alanine 397–glutamate 434, glycine 467–serine 491, and valine 645–alanine 709. Threonine 399 is subject to Phosphothreonine. Residue serine 401 is modified to Phosphoserine. The F&amp;H signature appears at serine 403 to alanine 414. Serine 410 is modified (phosphoserine; by PKA). One can recognise a PID domain in the interval serine 496–glutamine 656. Residues leucine 621–serine 673 are a coiled coil. A compositionally biased stretch (basic and acidic residues) spans valine 645 to serine 667. Residues serine 674–serine 693 are compositionally biased toward polar residues. Serine 693 and serine 696 each carry phosphoserine. Over residues glutamate 700–alanine 709 the composition is skewed to basic and acidic residues.

Homodimer. Binds RAB5A/Rab5 through an N-terminal domain. This interaction is essential for its recruitment to endosomal membranes as well as its role in cell proliferation. Binds DCC and the catalytic domain of the inactive form of AKT2 through its PID domain. Binds PIK3CA and subunits of the NuRD/MeCP1 complex. Interacts with OCRL and INPP5B. Interacts with NTRK2. Interacts with APPL2; interaction is independent of follicle stimulating hormone stimulation; interaction is decreased by adiponectin in a time-dependent manner. Forms a complex with APPL2 and RUVBL2. Forms a complex comprising APPL2, RUVBL2, CTNNB1, HDAC1 and HDAC2; interaction reduces interaction between CTNNB1, HDAC1, HDAC2 and RUVBL2 leading to the decrease of deacetylase activity of this complex; affects the recruitment of repressive complexes to the Wnt target genes. Interacts with ANXA2. Interacts with TGFBR1; interaction is TGF beta dependent; mediates trafficking of the TGFBR1 from the endosomes to the nucleus via microtubules in a TRAF6-dependent manner. Interacts with PRKCZ. Interacts with PIK3R1 and APPL2. Interacts with ADIPOR1; ADIPOQ enhances this interaction; inhibites adiponectin-stimulated binding of APPL2 to ADIPOR1. Phosphorylation at Ser-410 by PKA severely impairs binding to OCRL. As to expression, high levels in heart, ovary, pancreas and skeletal muscle.

Its subcellular location is the early endosome membrane. The protein localises to the nucleus. It is found in the cytoplasm. The protein resides in the endosome. It localises to the cell projection. Its subcellular location is the ruffle. The protein localises to the cytoplasmic vesicle. It is found in the phagosome. In terms of biological role, multifunctional adapter protein that binds to various membrane receptors, nuclear factors and signaling proteins to regulate many processes, such as cell proliferation, immune response, endosomal trafficking and cell metabolism. Regulates signaling pathway leading to cell proliferation through interaction with RAB5A and subunits of the NuRD/MeCP1 complex. Functions as a positive regulator of innate immune response via activation of AKT1 signaling pathway by forming a complex with APPL1 and PIK3R1. Inhibits Fc-gamma receptor-mediated phagocytosis through PI3K/Akt signaling in macrophages. Regulates TLR4 signaling in activated macrophages. Involved in trafficking of the TGFBR1 from the endosomes to the nucleus via microtubules in a TRAF6-dependent manner. Plays a role in cell metabolism by regulating adiponecting and insulin signaling pathways. Required for fibroblast migration through HGF cell signaling. Positive regulator of beta-catenin/TCF-dependent transcription through direct interaction with RUVBL2/reptin resulting in the relief of RUVBL2-mediated repression of beta-catenin/TCF target genes by modulating the interactions within the beta-catenin-reptin-HDAC complex. In Homo sapiens (Human), this protein is DCC-interacting protein 13-alpha.